The primary structure comprises 198 residues: Putative nitroreductase MJ1384 (198 aa).

This sequence belongs to the nitroreductase family. FMN is required as a cofactor.

The polypeptide is Putative nitroreductase MJ1384 (Methanocaldococcus jannaschii (strain ATCC 43067 / DSM 2661 / JAL-1 / JCM 10045 / NBRC 100440) (Methanococcus jannaschii)).